Consider the following 731-residue polypeptide: Catalase-peroxidase (731 aa).

Positions 98-227 (WHAAGTYRTA…LAAIQMGLIY (130 aa)) form a cross-link, tryptophyl-tyrosyl-methioninium (Trp-Tyr) (with M-254). His99 functions as the Proton acceptor in the catalytic mechanism. The segment at residues 227–254 (YVNPEGPQGNPHDDEGMARDMKETFKRM) is a cross-link (tryptophyl-tyrosyl-methioninium (Tyr-Met) (with W-98)). His269 serves as a coordination point for heme b.

It belongs to the peroxidase family. Peroxidase/catalase subfamily. As to quaternary structure, homodimer or homotetramer. The cofactor is heme b. Post-translationally, formation of the three residue Trp-Tyr-Met cross-link is important for the catalase, but not the peroxidase activity of the enzyme.

The enzyme catalyses H2O2 + AH2 = A + 2 H2O. It carries out the reaction 2 H2O2 = O2 + 2 H2O. Functionally, bifunctional enzyme with both catalase and broad-spectrum peroxidase activity. This is Catalase-peroxidase from Sphingopyxis alaskensis (strain DSM 13593 / LMG 18877 / RB2256) (Sphingomonas alaskensis).